The primary structure comprises 314 residues: Quinolinate synthase (314 aa).

Iminosuccinate-binding residues include His-27 and Ser-44. Residue Cys-89 participates in [4Fe-4S] cluster binding. Iminosuccinate is bound by residues 115–117 and Ser-132; that span reads YIN. Residue Cys-175 coordinates [4Fe-4S] cluster. Residues 201-203 and Thr-218 each bind iminosuccinate; that span reads HPE. Position 271 (Cys-271) interacts with [4Fe-4S] cluster.

This sequence belongs to the quinolinate synthase family. Type 2 subfamily. [4Fe-4S] cluster serves as cofactor.

The protein localises to the cytoplasm. It carries out the reaction iminosuccinate + dihydroxyacetone phosphate = quinolinate + phosphate + 2 H2O + H(+). It participates in cofactor biosynthesis; NAD(+) biosynthesis; quinolinate from iminoaspartate: step 1/1. In terms of biological role, catalyzes the condensation of iminoaspartate with dihydroxyacetone phosphate to form quinolinate. This Ehrlichia chaffeensis (strain ATCC CRL-10679 / Arkansas) protein is Quinolinate synthase.